We begin with the raw amino-acid sequence, 298 residues long: Glycine--tRNA ligase alpha subunit (298 aa).

This sequence belongs to the class-II aminoacyl-tRNA synthetase family. Tetramer of two alpha and two beta subunits.

The protein resides in the cytoplasm. The enzyme catalyses tRNA(Gly) + glycine + ATP = glycyl-tRNA(Gly) + AMP + diphosphate. This is Glycine--tRNA ligase alpha subunit from Helicobacter pylori (strain G27).